A 476-amino-acid polypeptide reads, in one-letter code: RNA-splicing ligase RtcB homolog (476 aa).

5 residues coordinate Mn(2+): D90, C93, H198, H230, and H324. 197–201 (NHYAE) contacts GMP. Residues 324-325 (HN), 373-376 (GGTM), S380, 399-402 (HGAG), and K475 contribute to the GMP site. H399 acts as the GMP-histidine intermediate in catalysis.

Belongs to the RtcB family. Catalytic component of the tRNA-splicing ligase complex. The cofactor is Mn(2+).

It carries out the reaction a 3'-end 3'-phospho-ribonucleotide-RNA + a 5'-end dephospho-ribonucleoside-RNA + GTP = a ribonucleotidyl-ribonucleotide-RNA + GMP + diphosphate. The catalysed reaction is a 3'-end 2',3'-cyclophospho-ribonucleotide-RNA + a 5'-end dephospho-ribonucleoside-RNA + GTP + H2O = a ribonucleotidyl-ribonucleotide-RNA + GMP + diphosphate + H(+). In terms of biological role, catalytic subunit of the tRNA-splicing ligase complex that acts by directly joining spliced tRNA halves to mature-sized tRNAs by incorporating the precursor-derived splice junction phosphate into the mature tRNA as a canonical 3',5'-phosphodiester. May act as an RNA ligase with broad substrate specificity, and may function toward other RNAs. In Chlamydomonas reinhardtii (Chlamydomonas smithii), this protein is RNA-splicing ligase RtcB homolog.